Reading from the N-terminus, the 499-residue chain is Serine/threonine protein phosphatase 2A 57 kDa regulatory subunit B' beta isoform (499 aa).

A compositionally biased stretch (basic residues) spans 1–13 (MFKKIMKGGHRKP). Positions 1-65 (MFKKIMKGGH…PVTATPPPPP (65 aa)) are disordered.

The protein belongs to the phosphatase 2A regulatory subunit B56 family. PP2A consists of a common heteromeric enzyme, composed of a catalytic subunit (subunits C), a constant regulatory subunit (subunit A), and a variety of regulatory subunits such as subunits B (the R2/B/PR55/B55, R3/B''/PR72/PR130/PR59 and R5/B'/B56 families). Interacts with BZR1. Interacts with BRI1. Interacts with SRK2E/OST1. In terms of tissue distribution, expressed ubiquitously, higher levels in cotyledons and flowers.

Its subcellular location is the nucleus. The protein localises to the cytoplasm. Functionally, the B regulatory subunit may modulate substrate selectivity and catalytic activity, and may also direct the localization of the catalytic enzyme to a particular subcellular compartment. Required for the formation of the PP2A holoenzyme that positively regulates brassinosteroid signaling by dephosphorylating and activating BZR1. The sequence is that of Serine/threonine protein phosphatase 2A 57 kDa regulatory subunit B' beta isoform (B'BETA) from Arabidopsis thaliana (Mouse-ear cress).